We begin with the raw amino-acid sequence, 172 residues long: uncharacterized protein (172 aa).

Residues 109–129 (MLLLYLYYNLLLLTASTPLTF) traverse the membrane as a helical segment.

Its subcellular location is the membrane. This is an uncharacterized protein from Saccharomyces cerevisiae (strain ATCC 204508 / S288c) (Baker's yeast).